Reading from the N-terminus, the 111-residue chain is UPF0321 protein P20C8.02c (111 aa).

An N-terminal signal peptide occupies residues 1–17; that stretch reads MLLLFCICCVFIKLVLA. Asparagine 20 carries an N-linked (GlcNAc...) asparagine glycan.

It belongs to the UPF0321 family.

In Schizosaccharomyces pombe (strain 972 / ATCC 24843) (Fission yeast), this protein is UPF0321 protein P20C8.02c.